The sequence spans 219 residues: UPF0502 protein Ppro_2903 (219 aa).

The protein belongs to the UPF0502 family.

The sequence is that of UPF0502 protein Ppro_2903 from Pelobacter propionicus (strain DSM 2379 / NBRC 103807 / OttBd1).